A 301-amino-acid polypeptide reads, in one-letter code: Small ribosomal subunit biogenesis GTPase RsgA (301 aa).

One can recognise a CP-type G domain in the interval 65 to 224 (YNQLIRPKVA…LVDTPGFGNL (160 aa)). GTP is bound by residues 115-118 (SKYD) and 167-175 (GNSGVGKST). Zn(2+) is bound by residues Cys-247, Cys-252, His-254, and Cys-260.

It belongs to the TRAFAC class YlqF/YawG GTPase family. RsgA subfamily. Monomer. Associates with 30S ribosomal subunit, binds 16S rRNA. The cofactor is Zn(2+).

It is found in the cytoplasm. Its function is as follows. One of several proteins that assist in the late maturation steps of the functional core of the 30S ribosomal subunit. Helps release RbfA from mature subunits. May play a role in the assembly of ribosomal proteins into the subunit. Circularly permuted GTPase that catalyzes slow GTP hydrolysis, GTPase activity is stimulated by the 30S ribosomal subunit. This Ureaplasma urealyticum serovar 10 (strain ATCC 33699 / Western) protein is Small ribosomal subunit biogenesis GTPase RsgA.